Consider the following 20-residue polypeptide: Photosystem II stability/assembly factor HCF136, chloroplastic (20 aa).

This sequence belongs to the Ycf48 family.

Its subcellular location is the plastid. It localises to the chloroplast thylakoid lumen. Functionally, essential for photosystem II (PSII) biogenesis; required for assembly of an early intermediate in PSII assembly that includes D2 (psbD) and cytochrome b559. This chain is Photosystem II stability/assembly factor HCF136, chloroplastic, found in Spinacia oleracea (Spinach).